The sequence spans 230 residues: Phosphoribosylaminoimidazole-succinocarboxamide synthase (230 aa).

The protein belongs to the SAICAR synthetase family.

It catalyses the reaction 5-amino-1-(5-phospho-D-ribosyl)imidazole-4-carboxylate + L-aspartate + ATP = (2S)-2-[5-amino-1-(5-phospho-beta-D-ribosyl)imidazole-4-carboxamido]succinate + ADP + phosphate + 2 H(+). It participates in purine metabolism; IMP biosynthesis via de novo pathway; 5-amino-1-(5-phospho-D-ribosyl)imidazole-4-carboxamide from 5-amino-1-(5-phospho-D-ribosyl)imidazole-4-carboxylate: step 1/2. In Thermotoga petrophila (strain ATCC BAA-488 / DSM 13995 / JCM 10881 / RKU-1), this protein is Phosphoribosylaminoimidazole-succinocarboxamide synthase.